We begin with the raw amino-acid sequence, 451 residues long: Zinc metalloproteinase nas-16 (451 aa).

Residues 70–273 (QVVTKLFSPQ…LTINTAYNCK (204 aa)) form the Peptidase M12A domain. Intrachain disulfides connect cysteine 127/cysteine 272, cysteine 148/cysteine 167, cysteine 274/cysteine 291, and cysteine 296/cysteine 305. The N-linked (GlcNAc...) asparagine glycan is linked to asparagine 133. Residue histidine 175 participates in Zn(2+) binding. Glutamate 176 is an active-site residue. Positions 179 and 185 each coordinate Zn(2+). Positions 267-306 (NTAYNCKCPSELLCANGGYTNPSNCLECICPLGYGGVLCD) constitute an EGF-like domain. N-linked (GlcNAc...) asparagine glycosylation is found at asparagine 363 and asparagine 438.

It depends on Zn(2+) as a cofactor.

The protein resides in the secreted. Functionally, metalloprotease. This is Zinc metalloproteinase nas-16 (nas-16) from Caenorhabditis elegans.